Here is a 380-residue protein sequence, read N- to C-terminus: Forkhead box protein F1 (380 aa).

Polar residues predominate over residues 1 to 19; that stretch reads MTAEVQQPSVQTPAHSSPM. The segment at 1-49 is disordered; sequence MTAEVQQPSVQTPAHSSPMTEKPVQTPVMETSSSSSSTKAKKTNAGIRR. A DNA-binding region (fork-head) is located at residues 52-146; it reads KPPYSYIALI…EEGSFRRRPR (95 aa).

The protein localises to the nucleus. The protein is Forkhead box protein F1 (foxf1) of Danio rerio (Zebrafish).